The sequence spans 117 residues: Minor capsid protein p17 (117 aa).

A glycan (N-linked (GlcNAc...) asparagine; by host) is linked at Asn12. Residues 39–59 traverse the membrane as a helical segment; sequence AILLGILILLVIILIIVAIVY. Residues 96 to 117 form a disordered region; that stretch reads KNSTSQQSHIPSDEQLAELAHS. Asn97 carries an N-linked (GlcNAc...) asparagine; by host glycan.

This sequence belongs to the asfivirus minor capsid protein p17 family. As to quaternary structure, interacts with the minor capsid protein M1249L and with the hexon capsid protein p72 capsomers; these interactions form a rigid zipper structure that stabilizes the capsomers. Interacts with host STING1.

The protein resides in the virion membrane. It is found in the host endoplasmic reticulum membrane. In terms of biological role, together with the penton and the other minor capsid proteins (M1249L, p49), forms a complicated network immediately below the outer capsid shell, stabilizing the whole capsid. Three copies of p17 encircle each p72 capsomer in the inner capsid shell, anchoring p72 capsomers on the inner membrane. Required for the assembly of the capsid and icosahedral morphogenesis. Additionally, inhibits the host cGAS-STING pathway through its interaction with STING1 and subsequent interference of the recruitment of downstream components TBK1 and IKBKE. This chain is Minor capsid protein p17, found in African swine fever virus (isolate Tick/South Africa/Pretoriuskop Pr4/1996) (ASFV).